The chain runs to 372 residues: Phospho-N-acetylmuramoyl-pentapeptide-transferase (372 aa).

10 helical membrane passes run 25-45, 73-93, 98-118, 134-154, 176-196, 211-231, 251-271, 275-295, 300-320, and 349-369; these read RSLLSVLTSLTIGLVLGPIMI, TMGGILILLSIGISTLLWADL, VWIVLGVMVVFGAVGWADDWI, FFWTSVASLGAGIALYLIATQ, SIPLSIVPLGLAFIVFTYLVI, GLAIMPVVMVATGLGVFAYLS, LVVICSAMIGAGLAFLWYNAH, VFMGDVGALALGAMLGTIAVM, IVFAIMGGVFVMEAVSVFLQI, and QVVIRFWIITIMLVVLGLMTL.

The protein belongs to the glycosyltransferase 4 family. MraY subfamily. Mg(2+) serves as cofactor.

The protein resides in the cell inner membrane. It catalyses the reaction UDP-N-acetyl-alpha-D-muramoyl-L-alanyl-gamma-D-glutamyl-meso-2,6-diaminopimeloyl-D-alanyl-D-alanine + di-trans,octa-cis-undecaprenyl phosphate = di-trans,octa-cis-undecaprenyl diphospho-N-acetyl-alpha-D-muramoyl-L-alanyl-D-glutamyl-meso-2,6-diaminopimeloyl-D-alanyl-D-alanine + UMP. The protein operates within cell wall biogenesis; peptidoglycan biosynthesis. Functionally, catalyzes the initial step of the lipid cycle reactions in the biosynthesis of the cell wall peptidoglycan: transfers peptidoglycan precursor phospho-MurNAc-pentapeptide from UDP-MurNAc-pentapeptide onto the lipid carrier undecaprenyl phosphate, yielding undecaprenyl-pyrophosphoryl-MurNAc-pentapeptide, known as lipid I. In Acinetobacter baumannii (strain AB0057), this protein is Phospho-N-acetylmuramoyl-pentapeptide-transferase.